A 186-amino-acid chain; its full sequence is Ribosome-recycling factor (186 aa).

It belongs to the RRF family.

Its subcellular location is the cytoplasm. Its function is as follows. Responsible for the release of ribosomes from messenger RNA at the termination of protein biosynthesis. May increase the efficiency of translation by recycling ribosomes from one round of translation to another. The sequence is that of Ribosome-recycling factor from Rhizobium leguminosarum bv. trifolii (strain WSM2304).